Here is a 157-residue protein sequence, read N- to C-terminus: S-ribosylhomocysteine lyase (157 aa).

Positions 54, 58, and 126 each coordinate Fe cation.

This sequence belongs to the LuxS family. In terms of assembly, homodimer. Requires Fe cation as cofactor.

It carries out the reaction S-(5-deoxy-D-ribos-5-yl)-L-homocysteine = (S)-4,5-dihydroxypentane-2,3-dione + L-homocysteine. Its function is as follows. Involved in the synthesis of autoinducer 2 (AI-2) which is secreted by bacteria and is used to communicate both the cell density and the metabolic potential of the environment. The regulation of gene expression in response to changes in cell density is called quorum sensing. Catalyzes the transformation of S-ribosylhomocysteine (RHC) to homocysteine (HC) and 4,5-dihydroxy-2,3-pentadione (DPD). This chain is S-ribosylhomocysteine lyase, found in Bacillus cereus (strain 03BB102).